We begin with the raw amino-acid sequence, 166 residues long: Arginine repressor (166 aa).

The protein belongs to the ArgR family.

The protein localises to the cytoplasm. Its pathway is amino-acid biosynthesis; L-arginine biosynthesis [regulation]. In terms of biological role, regulates arginine biosynthesis genes. The polypeptide is Arginine repressor (Mycobacterium ulcerans (strain Agy99)).